Consider the following 145-residue polypeptide: MDIRQMNRTHLDHWRGLRKQLWPGHPDDAHLADGEEILQADHLASFIAMADGVAIGFADASIRHDYVNGCDSSPVVFLEGIFVLPSFRQRGVAKQLIAAVQRWGTNKGCREMASDTSPENTISQKVHQALGFEETERVIFYRKRC.

One can recognise an N-acetyltransferase domain in the interval 1–145 (MDIRQMNRTH…ERVIFYRKRC (145 aa)). 4 residues coordinate substrate: tryptophan 22, histidine 25, tyrosine 66, and glutamate 79. Residues 81–83 (IFV) and 89–94 (QRGVAK) each bind acetyl-CoA. Aspartate 115 is a substrate binding site. Asparagine 120 serves as a coordination point for acetyl-CoA. Glutamate 136 lines the substrate pocket.

As to quaternary structure, homodimer.

It carries out the reaction kanamycin B + acetyl-CoA = N(6')-acetylkanamycin B + CoA + H(+). In terms of biological role, catalyzes the transfer of an acetyl group from acetyl-CoA to the 6'-amino group of aminoglycoside molecules conferring resistance to antibiotics containing the purpurosamine ring. The chain is Aminoglycoside N(6')-acetyltransferase type 1 from Salmonella typhimurium (strain LT2 / SGSC1412 / ATCC 700720).